Here is a 588-residue protein sequence, read N- to C-terminus: Aspartate--tRNA ligase (588 aa).

L-aspartate is bound at residue Glu-177. The tract at residues 201–204 (QLFK) is aspartate. Arg-223 contacts L-aspartate. ATP contacts are provided by residues 223 to 225 (RDE) and Gln-232. His-451 contributes to the L-aspartate binding site. Glu-485 is an ATP binding site. Residue Arg-492 coordinates L-aspartate. An ATP-binding site is contributed by 537-540 (GLDR).

Belongs to the class-II aminoacyl-tRNA synthetase family. Type 1 subfamily. Homodimer.

The protein resides in the cytoplasm. The enzyme catalyses tRNA(Asp) + L-aspartate + ATP = L-aspartyl-tRNA(Asp) + AMP + diphosphate. In terms of biological role, catalyzes the attachment of L-aspartate to tRNA(Asp) in a two-step reaction: L-aspartate is first activated by ATP to form Asp-AMP and then transferred to the acceptor end of tRNA(Asp). The sequence is that of Aspartate--tRNA ligase from Staphylococcus epidermidis (strain ATCC 35984 / DSM 28319 / BCRC 17069 / CCUG 31568 / BM 3577 / RP62A).